We begin with the raw amino-acid sequence, 811 residues long: Probable potassium transporter 16 (811 aa).

Over 1 to 66 (MAQQQAGARG…GQESWMRTLR (66 aa)) the chain is Cytoplasmic. A helical transmembrane segment spans residues 67 to 87 (LGFQCVGILHADLGTSPLYVY). Topologically, residues 88–100 (QNTFKYGIKHEDD) are extracellular. Residues 101–121 (IIGVLSLIIYSFVLFTMVKIV) form a helical membrane-spanning segment. At 122-190 (FIALHANDDG…KSQLEKKPAK (69 aa)) the chain is on the cytoplasmic side. A helical transmembrane segment spans residues 191-211 (IAVFFLTIFATALAISDCVLN). Residues 212–228 (PSVSVLSAVNGLKLRAP) are Extracellular-facing. The helical transmembrane segment at 229-249 (HLTTDEVVWITVGILVVFFAV) threads the bilayer. At 250–256 (QRFGTDK) the chain is on the cytoplasmic side. The helical transmembrane segment at 257–277 (IGYTFAPVVVVWLLLISGIGI) threads the bilayer. At 278–310 (YDLVKYDVGVLRAFNPKYIIDYFRRNKKDGWVQ) the chain is on the extracellular side. A helical membrane pass occupies residues 311-331 (LGEVLLTFTGTEALFADLGYF). Residues 332–337 (SIKSIQ) are Cytoplasmic-facing. The helical transmembrane segment at 338–358 (LSSTFVLLPSVLCTYIGQAAY) threads the bilayer. Residues 359–379 (LRKHMDQQHIQNAFFNSIPRP) are Extracellular-facing. The helical transmembrane segment at 380–400 (LFWPMFVLAIMTSVIGCQAMV) threads the bilayer. Residues 401-438 (SCAFATMSHLQTLNCFPRIKILHTSRRYSGQLYSPEVN) lie on the Cytoplasmic side of the membrane. A helical membrane pass occupies residues 439–459 (FFLCLLSCVITLSFRTTGFIV). Topologically, residues 460–463 (KAHE) are extracellular. A helical transmembrane segment spans residues 464–484 (ICVVLVMVITTILMTIVMLLV). The Cytoplasmic portion of the chain corresponds to 485–488 (WKVN). The chain crosses the membrane as a helical span at residues 489–509 (IWWIVLFFVVFMSTETVYLSA). Topologically, residues 510 to 519 (VLYKFTKGPY) are extracellular. The chain crosses the membrane as a helical span at residues 520–540 (MPLAMSAVLMVIMFVWHYVHV). Residues 541-811 (KRYKFELEHT…LLKVGITYEI (271 aa)) lie on the Cytoplasmic side of the membrane.

It belongs to the HAK/KUP transporter (TC 2.A.72.3) family.

The protein resides in the membrane. Its function is as follows. High-affinity potassium transporter. This chain is Probable potassium transporter 16 (HAK16), found in Oryza sativa subsp. japonica (Rice).